The primary structure comprises 275 residues: Type III pantothenate kinase (275 aa).

6–13 (DAGNTNIV) provides a ligand contact to ATP. Residue 108–111 (GADR) coordinates substrate. Asp110 (proton acceptor) is an active-site residue. Position 130 (Asp130) interacts with K(+). ATP is bound at residue Thr133. Thr187 serves as a coordination point for substrate.

This sequence belongs to the type III pantothenate kinase family. Homodimer. The cofactor is NH4(+). K(+) serves as cofactor.

The protein localises to the cytoplasm. It carries out the reaction (R)-pantothenate + ATP = (R)-4'-phosphopantothenate + ADP + H(+). Its pathway is cofactor biosynthesis; coenzyme A biosynthesis; CoA from (R)-pantothenate: step 1/5. Its function is as follows. Catalyzes the phosphorylation of pantothenate (Pan), the first step in CoA biosynthesis. The protein is Type III pantothenate kinase of Zymomonas mobilis subsp. mobilis (strain ATCC 31821 / ZM4 / CP4).